The sequence spans 256 residues: Leucyl/phenylalanyl-tRNA--protein transferase (256 aa).

A disordered region spans residues 232–256 (DGCTGASRHGPGADMRRGDMSREST). Residues 245-256 (DMRRGDMSREST) are compositionally biased toward basic and acidic residues.

The protein belongs to the L/F-transferase family.

It is found in the cytoplasm. The enzyme catalyses N-terminal L-lysyl-[protein] + L-leucyl-tRNA(Leu) = N-terminal L-leucyl-L-lysyl-[protein] + tRNA(Leu) + H(+). The catalysed reaction is N-terminal L-arginyl-[protein] + L-leucyl-tRNA(Leu) = N-terminal L-leucyl-L-arginyl-[protein] + tRNA(Leu) + H(+). It carries out the reaction L-phenylalanyl-tRNA(Phe) + an N-terminal L-alpha-aminoacyl-[protein] = an N-terminal L-phenylalanyl-L-alpha-aminoacyl-[protein] + tRNA(Phe). In terms of biological role, functions in the N-end rule pathway of protein degradation where it conjugates Leu, Phe and, less efficiently, Met from aminoacyl-tRNAs to the N-termini of proteins containing an N-terminal arginine or lysine. The polypeptide is Leucyl/phenylalanyl-tRNA--protein transferase (Chromohalobacter salexigens (strain ATCC BAA-138 / DSM 3043 / CIP 106854 / NCIMB 13768 / 1H11)).